The chain runs to 202 residues: ATP-dependent Clp protease proteolytic subunit (202 aa).

The active-site Nucleophile is the S101. Residue H126 is part of the active site.

It belongs to the peptidase S14 family. In terms of assembly, component of the chloroplastic Clp protease core complex.

The protein resides in the plastid. The protein localises to the chloroplast stroma. The catalysed reaction is Hydrolysis of proteins to small peptides in the presence of ATP and magnesium. alpha-casein is the usual test substrate. In the absence of ATP, only oligopeptides shorter than five residues are hydrolyzed (such as succinyl-Leu-Tyr-|-NHMec, and Leu-Tyr-Leu-|-Tyr-Trp, in which cleavage of the -Tyr-|-Leu- and -Tyr-|-Trp bonds also occurs).. Its function is as follows. Cleaves peptides in various proteins in a process that requires ATP hydrolysis. Has a chymotrypsin-like activity. Plays a major role in the degradation of misfolded proteins. This Platanus occidentalis (Sycamore) protein is ATP-dependent Clp protease proteolytic subunit.